Reading from the N-terminus, the 220-residue chain is Large ribosomal subunit protein uL16 (220 aa).

It belongs to the universal ribosomal protein uL16 family. Component of the small ribosomal subunit. Mature ribosomes consist of a small (40S) and a large (60S) subunit. The 40S subunit contains about 33 different proteins and 1 molecule of RNA (18S). The 60S subunit contains about 49 different proteins and 3 molecules of RNA (25S, 5.8S and 5S).

The sequence is that of Large ribosomal subunit protein uL16 (RPL10) from Zea mays (Maize).